The chain runs to 877 residues: Alanine--tRNA ligase (877 aa).

Residues His-567, His-571, Cys-669, and His-673 each coordinate Zn(2+).

The protein belongs to the class-II aminoacyl-tRNA synthetase family. Requires Zn(2+) as cofactor.

Its subcellular location is the cytoplasm. The enzyme catalyses tRNA(Ala) + L-alanine + ATP = L-alanyl-tRNA(Ala) + AMP + diphosphate. Functionally, catalyzes the attachment of alanine to tRNA(Ala) in a two-step reaction: alanine is first activated by ATP to form Ala-AMP and then transferred to the acceptor end of tRNA(Ala). Also edits incorrectly charged Ser-tRNA(Ala) and Gly-tRNA(Ala) via its editing domain. The polypeptide is Alanine--tRNA ligase (Rickettsia typhi (strain ATCC VR-144 / Wilmington)).